Reading from the N-terminus, the 263-residue chain is 3-methyl-2-oxobutanoate hydroxymethyltransferase (263 aa).

Residues Asp45 and Asp84 each contribute to the Mg(2+) site. Residues 45–46, Asp84, and Lys112 contribute to the 3-methyl-2-oxobutanoate site; that span reads DS. Glu114 is a Mg(2+) binding site. The active-site Proton acceptor is Glu180.

It belongs to the PanB family. As to quaternary structure, homodecamer; pentamer of dimers. Requires Mg(2+) as cofactor.

Its subcellular location is the cytoplasm. It catalyses the reaction 3-methyl-2-oxobutanoate + (6R)-5,10-methylene-5,6,7,8-tetrahydrofolate + H2O = 2-dehydropantoate + (6S)-5,6,7,8-tetrahydrofolate. Its pathway is cofactor biosynthesis; (R)-pantothenate biosynthesis; (R)-pantoate from 3-methyl-2-oxobutanoate: step 1/2. Functionally, catalyzes the reversible reaction in which hydroxymethyl group from 5,10-methylenetetrahydrofolate is transferred onto alpha-ketoisovalerate to form ketopantoate. In Salmonella arizonae (strain ATCC BAA-731 / CDC346-86 / RSK2980), this protein is 3-methyl-2-oxobutanoate hydroxymethyltransferase.